Here is a 147-residue protein sequence, read N- to C-terminus: MPLVPKRVKHRREFRGKMRGAAKGGKTVAFGEYGLEALESHWITNRQIEAARVAMTRYMKRGGKVWIRIFPQKSYTAKGVGVRMGSGKGAPAGWVAVVKREKIMFEIGGVSEETAREAMRLAASKLPIKCKFVKREDQEAGGATNED.

This sequence belongs to the universal ribosomal protein uL16 family. As to quaternary structure, part of the 50S ribosomal subunit.

Functionally, binds 23S rRNA and is also seen to make contacts with the A and possibly P site tRNAs. In Lactobacillus delbrueckii subsp. bulgaricus (strain ATCC 11842 / DSM 20081 / BCRC 10696 / JCM 1002 / NBRC 13953 / NCIMB 11778 / NCTC 12712 / WDCM 00102 / Lb 14), this protein is Large ribosomal subunit protein uL16.